The sequence spans 130 residues: Protein NrdI (130 aa).

This sequence belongs to the NrdI family.

Functionally, probably involved in ribonucleotide reductase function. The polypeptide is Protein NrdI (Bacillus velezensis (strain DSM 23117 / BGSC 10A6 / LMG 26770 / FZB42) (Bacillus amyloliquefaciens subsp. plantarum)).